The primary structure comprises 200 residues: Nucleoside triphosphate pyrophosphatase (200 aa).

The Proton acceptor role is filled by Asp79.

This sequence belongs to the Maf family. A divalent metal cation is required as a cofactor.

The protein localises to the cytoplasm. The catalysed reaction is a ribonucleoside 5'-triphosphate + H2O = a ribonucleoside 5'-phosphate + diphosphate + H(+). The enzyme catalyses a 2'-deoxyribonucleoside 5'-triphosphate + H2O = a 2'-deoxyribonucleoside 5'-phosphate + diphosphate + H(+). Nucleoside triphosphate pyrophosphatase. May have a dual role in cell division arrest and in preventing the incorporation of modified nucleotides into cellular nucleic acids. The protein is Nucleoside triphosphate pyrophosphatase of Legionella pneumophila subsp. pneumophila (strain Philadelphia 1 / ATCC 33152 / DSM 7513).